Consider the following 403-residue polypeptide: 5,7-dihydroxy-2-methylchromone synthase (403 aa).

Position 68 (His68) interacts with CoA. The active site involves Cys174. Cys174 bears the Cysteine sulfinic acid (-SO2H) mark. CoA is bound by residues Leu277, Ser281, and 318-321 (GGRA).

It belongs to the thiolase-like superfamily. Chalcone/stilbene synthases family. As to quaternary structure, homodimer.

It carries out the reaction 5 malonyl-CoA + 4 H(+) = 5,7-dihydroxy-2-methyl-4H-chromen-4-one + 5 CO2 + 5 CoA + H2O. Its pathway is secondary metabolite biosynthesis; flavonoid biosynthesis. Catalyzes the iterative condensations of 5 molecules of malonyl-CoA to produce a pentaketide 5,7-dihydroxy-2-methylchromone. This chain is 5,7-dihydroxy-2-methylchromone synthase, found in Aloe arborescens (Kidachi aloe).